Here is a 402-residue protein sequence, read N- to C-terminus: MPSVAERILSEKVGEPVEAGETVYVEPDVIMLHDGSGATALRTLRELGVERVESPEKVVLIFDHSVPPSSVEAANRQNELLEFARRHRIEHVHVDEGVCHQVLVEEGYAGPGRVVFGGDSHTPTSGAASALAFGFGGTDMAFALLYGELWIRVPRTVRVHVEGELEEPATAKDLALTVVGELGAGYADYAVLEYTGLPERMSLGDRMCLCNLATEAGAKSAYVPPKEGPEELRPGDADEVIELDASEVEPVVSVPHRVDDVRPVGDVQGVEVTRVFVGSCTNGRYRDVRVFTEILEELDGPHPDVRIVVVPASRRVLERMTEAGLTLKLIRMGVMIAPPGCGPCLGEHLGVLGDDDVCVSTANRNFPGRMGSRRAEIYLASPVTAAVAAAEGELVDPQDVLG.

C280, C341, and C344 together coordinate [4Fe-4S] cluster.

Belongs to the aconitase/IPM isomerase family. LeuC type 2 subfamily. In terms of assembly, heterodimer of LeuC and LeuD. The cofactor is [4Fe-4S] cluster.

It carries out the reaction (2R,3S)-3-isopropylmalate = (2S)-2-isopropylmalate. Its pathway is amino-acid biosynthesis; L-leucine biosynthesis; L-leucine from 3-methyl-2-oxobutanoate: step 2/4. Functionally, catalyzes the isomerization between 2-isopropylmalate and 3-isopropylmalate, via the formation of 2-isopropylmaleate. This chain is 3-isopropylmalate dehydratase large subunit 2, found in Methanopyrus kandleri (strain AV19 / DSM 6324 / JCM 9639 / NBRC 100938).